The chain runs to 506 residues: Maturase K (506 aa).

It belongs to the intron maturase 2 family. MatK subfamily.

The protein localises to the plastid. It is found in the chloroplast. Usually encoded in the trnK tRNA gene intron. Probably assists in splicing its own and other chloroplast group II introns. The sequence is that of Maturase K from Trifolium microcephalum (Small-head clover).